Consider the following 261-residue polypeptide: GTP cyclohydrolase FolE2 (261 aa).

The protein belongs to the GTP cyclohydrolase IV family.

It carries out the reaction GTP + H2O = 7,8-dihydroneopterin 3'-triphosphate + formate + H(+). It participates in cofactor biosynthesis; 7,8-dihydroneopterin triphosphate biosynthesis; 7,8-dihydroneopterin triphosphate from GTP: step 1/1. Converts GTP to 7,8-dihydroneopterin triphosphate. The sequence is that of GTP cyclohydrolase FolE2 from Herminiimonas arsenicoxydans.